The primary structure comprises 368 residues: ATP-dependent (S)-NAD(P)H-hydrate dehydratase (368 aa).

Residues 3 to 359 (SPSKKLLANV…DEVHGSFLDL (357 aa)) enclose the YjeF C-terminal domain. (6S)-NADPHX-binding positions include Gly120 and 173 to 179 (NVVEFAR). ATP-binding positions include 217–221 (KGPHD) and 236–245 (GGLKRSGGQG). (6S)-NADPHX is bound at residue Asp246.

The protein belongs to the NnrD/CARKD family. The cofactor is Mg(2+).

The protein localises to the cytoplasm. The enzyme catalyses (6S)-NADHX + ATP = ADP + phosphate + NADH + H(+). It catalyses the reaction (6S)-NADPHX + ATP = ADP + phosphate + NADPH + H(+). Catalyzes the dehydration of the S-form of NAD(P)HX at the expense of ATP, which is converted to ADP. Together with NAD(P)HX epimerase, which catalyzes the epimerization of the S- and R-forms, the enzyme allows the repair of both epimers of NAD(P)HX, a damaged form of NAD(P)H that is a result of enzymatic or heat-dependent hydration. The chain is ATP-dependent (S)-NAD(P)H-hydrate dehydratase from Ajellomyces capsulatus (strain G186AR / H82 / ATCC MYA-2454 / RMSCC 2432) (Darling's disease fungus).